Consider the following 155-residue polypeptide: MNPTQQHLADRVSGLTEEVIVGTDYFLVDVEVRGHKGTRVVEVYIDSEEEVGHDDLALISKEIGFLLDVEDVVDGSYKLELSSPGIKRPLTMPAQYRKNVGRTLRVRFESDGDEEIVVGDLTDADDEEIELELPSAERLQLPYTTITQARIELPW.

The protein belongs to the RimP family.

It is found in the cytoplasm. Required for maturation of 30S ribosomal subunits. The chain is Ribosome maturation factor RimP from Salinibacter ruber (strain DSM 13855 / M31).